A 255-amino-acid polypeptide reads, in one-letter code: 5-oxoprolinase subunit A (255 aa).

Belongs to the LamB/PxpA family. In terms of assembly, forms a complex composed of PxpA, PxpB and PxpC.

The catalysed reaction is 5-oxo-L-proline + ATP + 2 H2O = L-glutamate + ADP + phosphate + H(+). Its function is as follows. Catalyzes the cleavage of 5-oxoproline to form L-glutamate coupled to the hydrolysis of ATP to ADP and inorganic phosphate. The sequence is that of 5-oxoprolinase subunit A from Campylobacter jejuni subsp. doylei (strain ATCC BAA-1458 / RM4099 / 269.97).